Reading from the N-terminus, the 133-residue chain is MSQNAAVYWGTGRRKCAIARVRLVPGSGELVINGRPGDEYLHFRQPLMSLAKAPLETLGLENQYNIIVNASGGGVAGQAGAIRLGIARALCELSPDNRRPLKVEGYLSRDPRAKERRKYGLKKARKAPQFSKR.

Basic and acidic residues predominate over residues K102 to A113. Positions K102–R133 are disordered. Positions K114–R133 are enriched in basic residues.

Belongs to the universal ribosomal protein uS9 family.

This chain is Small ribosomal subunit protein uS9, found in Gloeobacter violaceus (strain ATCC 29082 / PCC 7421).